Reading from the N-terminus, the 366-residue chain is Alanine racemase (366 aa).

Lys-40 acts as the Proton acceptor; specific for D-alanine in catalysis. Lys-40 bears the N6-(pyridoxal phosphate)lysine mark. A substrate-binding site is contributed by Arg-136. Tyr-263 acts as the Proton acceptor; specific for L-alanine in catalysis. Residue Met-310 coordinates substrate.

Belongs to the alanine racemase family. Pyridoxal 5'-phosphate is required as a cofactor.

It carries out the reaction L-alanine = D-alanine. It functions in the pathway amino-acid biosynthesis; D-alanine biosynthesis; D-alanine from L-alanine: step 1/1. Functionally, catalyzes the interconversion of L-alanine and D-alanine. May also act on other amino acids. The sequence is that of Alanine racemase (alr) from Streptococcus equi subsp. zooepidemicus (strain H70).